The sequence spans 306 residues: D-alanine--D-alanine ligase (306 aa).

The ATP-grasp domain maps to K101–E303. Residue V134 to T189 coordinates ATP. Residues D257, E270, and N272 each coordinate Mg(2+).

The protein belongs to the D-alanine--D-alanine ligase family. Mg(2+) is required as a cofactor. The cofactor is Mn(2+).

The protein localises to the cytoplasm. It catalyses the reaction 2 D-alanine + ATP = D-alanyl-D-alanine + ADP + phosphate + H(+). Its pathway is cell wall biogenesis; peptidoglycan biosynthesis. In terms of biological role, cell wall formation. This is D-alanine--D-alanine ligase from Photorhabdus laumondii subsp. laumondii (strain DSM 15139 / CIP 105565 / TT01) (Photorhabdus luminescens subsp. laumondii).